The primary structure comprises 392 residues: Sex-determining region Y protein (392 aa).

The tract at residues 4-81 (HVKRPMNAFM…YKYQPHRRAK (78 aa)) is sufficient for interaction with KPNB1. Residues 5–73 (VKRPMNAFMV…LHREKYPNYK (69 aa)) constitute a DNA-binding region (HMG box). Required for nuclear localization regions lie at residues 6–22 (KRPM…ERHK) and 75–81 (QPHRRAK). The segment at 52–84 (RPFFQEAQRLKILHREKYPNYKYQPHRRAKVSQ) is sufficient for interaction with EP300. K81 is modified (N6-acetyllysine). Positions 92–144 (AVASTKLYNLLQWDRNPHAITYRQDWSRAAHLYSKNQQSFYWQPVDIPTGHLQ) are necessary for interaction with ZNF208 isoform KRAB-O. Positions 94–138 (ASTKLYNLLQWDRNPHAITYRQDWSRAAHLYSKNQQSFYWQPVDI) are necessary for interaction with SLC9A3R2 and nuclear accumulation of SLC9A3R2. Residues 142-361 (HLQQQQQQQQ…QQQQQQQQQQ (220 aa)) form a disordered region. Residues 144–181 (QQQQQQQQQQQFHNHHQQQQQFYDHHQQQQQQQQQQQQ) show a composition bias toward low complexity. Composition is skewed to basic and acidic residues over residues 182–197 (FHDH…DHHQ) and 210–228 (QEQQ…HDHQ). Residues 229-238 (QQQQQQQQQQ) show a composition bias toward low complexity. Composition is skewed to basic and acidic residues over residues 239 to 250 (FHDHHQQKQQFH), 261 to 295 (FHDH…HDHP), and 313 to 349 (QFHD…DHHQ). Over residues 350 to 361 (QQQQQQQQQQQQ) the composition is skewed to low complexity.

It belongs to the SRY family. Interacts with KPNB1, ZNF208 isoform KRAB-O, PARP1 and SLC9A3R2. The interaction with KPNB1 is sensitive to dissociation by Ran in the GTP-bound form. Interaction with PARP1 impaired its DNA-binding activity. Interacts with CALM, EP300, HDAC3 and WT1. The interaction with EP300 modulates its DNA-binding activity. Degraded due to the presence of a degron at the C-terminus that promotes its degradation. In terms of processing, phosphorylated on serine residues by PKA. Phosphorylation by PKA enhances its DNA-binding activity and stimulates transcription repression. Post-translationally, acetylation of Lys-81 contributes to its nuclear localization and enhances its interaction with KPNB1. Poly-ADP-ribosylated by PARP1. ADP-ribosylation reduces its DNA-binding activity. As to expression, expressed in gonadal somatic pre-Sertoli cells. Expressed in the substantia nigra of the brain (at protein level). Expressed in diencephalon, cortex, the substantia nigra of the midbrain and the medial mammillary bodies of the hypothalamus of male, but not female. Expressed in gonadal somatic pre-Sertoli cells. While it is expressed at lower level compared to isoform Sry-S, this form is more stable and constitutes the predominant protein product of the Sry locus in XY gonads (at protein level).

Its subcellular location is the nucleus speckle. It localises to the cytoplasm. The protein resides in the nucleus. In terms of biological role, transcriptional regulator that controls a genetic switch in male development. It is necessary and sufficient for initiating male sex determination by directing the development of supporting cell precursors (pre-Sertoli cells) as Sertoli rather than granulosa cells. Involved in different aspects of gene regulation including promoter activation or repression. Binds to the DNA consensus sequence 5'-[AT]AACAA[AT]-3'. SRY HMG box recognizes DNA by partial intercalation in the minor groove and promotes DNA bending. Also involved in pre-mRNA splicing. In male adult brain involved in the maintenance of motor functions of dopaminergic neurons. Its function is as follows. Constitutes the major isoform, which is necessary and sufficient for initiating male sex determination. Functionally, constitutes a minor isoform, which is unstable due to the presence of a degron at the C-terminus that promotes its degradation. Not necessary and sufficient for initiating male sex determination. The sequence is that of Sex-determining region Y protein from Mus musculus (Mouse).